Consider the following 196-residue polypeptide: Protein GrpE (196 aa).

Residues 1-41 (MSSKEQKTPEGQAPEEIITEQHDDVEAVEPEVSAEQVDPRD) are disordered.

This sequence belongs to the GrpE family. As to quaternary structure, homodimer.

It is found in the cytoplasm. Participates actively in the response to hyperosmotic and heat shock by preventing the aggregation of stress-denatured proteins, in association with DnaK and GrpE. It is the nucleotide exchange factor for DnaK and may function as a thermosensor. Unfolded proteins bind initially to DnaJ; upon interaction with the DnaJ-bound protein, DnaK hydrolyzes its bound ATP, resulting in the formation of a stable complex. GrpE releases ADP from DnaK; ATP binding to DnaK triggers the release of the substrate protein, thus completing the reaction cycle. Several rounds of ATP-dependent interactions between DnaJ, DnaK and GrpE are required for fully efficient folding. The sequence is that of Protein GrpE from Klebsiella pneumoniae (strain 342).